We begin with the raw amino-acid sequence, 340 residues long: Entry-fusion complex protein OPG094 (340 aa).

The interval 1 to 20 (MGGGVSVELPKRDPPPGVPT) is disordered. Glycine 2 carries the N-myristoyl glycine; by host lipid modification. At 2–319 (GGGVSVELPK…VQHNIKHSFD (318 aa)) the chain is on the virion surface side. Residues 320 to 340 (LKLHLISLLSLLVIWILIVAI) form a helical; Signal-anchor for type II membrane protein membrane-spanning segment.

This sequence belongs to the orthopoxvirus OPG086 family. As to quaternary structure, interacts with OPG143. Component of the entry fusion complex (EFC) composed of OPG053, OPG076, OPG086, OPG094, OPG095, OPG099, OPG107, OPG143, OPG104, OPG147 and OPG155. Except for OPG095 and OPG053, each of the EFC proteins is required for assembly or stability of the complex. Post-translationally, unglycosylated because produced in viral factories instead of the classic ER -Golgi route.

Its subcellular location is the virion membrane. Its function is as follows. Component of the entry fusion complex (EFC), which consists of 11 proteins. During cell infection, this complex mediates entry of the virion core into the host cytoplasm by a two-step mechanism consisting of lipid mixing of the viral and cellular membranes and subsequent pore formation. In Variola virus, this protein is Entry-fusion complex protein OPG094 (OPG094).